Consider the following 68-residue polypeptide: Small ribosomal subunit protein bS21 (68 aa).

Residues 35 to 68 form a disordered region; that stretch reads HYEKPSEKRARERAAAVRRARKMERKRMERDGIK. Over residues 37-49 the composition is skewed to basic and acidic residues; sequence EKPSEKRARERAA. Over residues 50 to 59 the composition is skewed to basic residues; that stretch reads AVRRARKMER.

Belongs to the bacterial ribosomal protein bS21 family.

This is Small ribosomal subunit protein bS21 from Sphingopyxis alaskensis (strain DSM 13593 / LMG 18877 / RB2256) (Sphingomonas alaskensis).